Here is a 440-residue protein sequence, read N- to C-terminus: L-gulonolactone oxidase (440 aa).

Residues 17-187 (YGCSPEMYYQ…LTVTLQCVPQ (171 aa)) enclose the FAD-binding PCMH-type domain. Histidine 54 bears the Pros-8alpha-FAD histidine mark. A helical transmembrane segment spans residues 251-273 (IGFYLLEFLLWTSTYLPRLVGWI).

It belongs to the oxygen-dependent FAD-linked oxidoreductase family. FAD is required as a cofactor. In terms of tissue distribution, highly expressed in liver.

It localises to the microsome membrane. It is found in the endoplasmic reticulum membrane. It catalyses the reaction L-gulono-1,4-lactone + O2 = L-ascorbate + H2O2 + H(+). Its pathway is cofactor biosynthesis; L-ascorbate biosynthesis via UDP-alpha-D-glucuronate pathway; L-ascorbate from UDP-alpha-D-glucuronate: step 4/4. Functionally, oxidizes L-gulono-1,4-lactone to hydrogen peroxide and L-xylo-hexulonolactone which spontaneously isomerizes to L-ascorbate. This Mus musculus (Mouse) protein is L-gulonolactone oxidase (Gulo).